A 431-amino-acid polypeptide reads, in one-letter code: MAKNVVVVGCQWGDEGKGKLVDLLTDRVGAVVRFQGGHNAGHTLVIKGKKTILHLVPSGILRNNVLCVIGNGVVLSPSALMEEIRMLEQEGVPAQERLKISPACPLVLPYHVALDQARETARGERAIGTTGRGIGPAYEDKVARRTLRVGDLSDENRFAANLAEIMDYHNFILRDYYQAEVVSYEQVLEQALEFKAKFSHLVTDVPMLLAKLRREGKNILFEGAQGAFLDIDHGTYPFVTSSNTTAGSAATGSGVGPHDLDCVVGITKAYATRVGHGPFPTELEDDTGAHLAQRGQEFGATTHRPRRCGWLDLVALRRAAIINSISSLCITKLDVLDGLKRLCLCVAYHYNEEQCSEMPLDSDALVRCKPIYMELLGWQESTVGITEYEQLPLAARLYLEKIEELSGVPIDIISTGADREQTIILRDPYGI.

GTP contacts are provided by residues 13-19 (GDEGKGK) and 41-43 (GHT). Residue Asp14 is the Proton acceptor of the active site. The Mg(2+) site is built by Asp14 and Gly41. Residues 14–17 (DEGK), 39–42 (NAGH), Thr130, Arg144, Gln225, Thr240, and Arg304 contribute to the IMP site. His42 serves as the catalytic Proton donor. Position 300–306 (300–306 (ATTHRPR)) interacts with substrate. GTP is bound by residues Arg306, 332-334 (KLD), and 414-416 (STG).

The protein belongs to the adenylosuccinate synthetase family. In terms of assembly, homodimer. The cofactor is Mg(2+).

The protein localises to the cytoplasm. It carries out the reaction IMP + L-aspartate + GTP = N(6)-(1,2-dicarboxyethyl)-AMP + GDP + phosphate + 2 H(+). Its pathway is purine metabolism; AMP biosynthesis via de novo pathway; AMP from IMP: step 1/2. Plays an important role in the de novo pathway of purine nucleotide biosynthesis. Catalyzes the first committed step in the biosynthesis of AMP from IMP. This is Adenylosuccinate synthetase from Nitrosococcus oceani (strain ATCC 19707 / BCRC 17464 / JCM 30415 / NCIMB 11848 / C-107).